A 303-amino-acid polypeptide reads, in one-letter code: Ribose-5-phosphate isomerase (303 aa).

A compositionally biased stretch (gly residues) spans 22 to 33 (AGGAASGGGGNN). The disordered stretch occupies residues 22–75 (AGGAASGGGGNNWGLSGSHVQLPGRAHSETRGDKGGSSAGGPAPSTMSKAEEAK). Omega-N-methylarginine is present on Arg52. Ser99 carries the phosphoserine modification.

It belongs to the ribose 5-phosphate isomerase family. Widely expressed, with highest levels in testis.

It catalyses the reaction aldehydo-D-ribose 5-phosphate = D-ribulose 5-phosphate. It functions in the pathway carbohydrate degradation; pentose phosphate pathway; D-ribose 5-phosphate from D-ribulose 5-phosphate (non-oxidative stage): step 1/1. The protein is Ribose-5-phosphate isomerase (Rpia) of Mus musculus (Mouse).